A 333-amino-acid chain; its full sequence is 6-phosphogluconolactonase (333 aa).

This sequence belongs to the cycloisomerase 2 family.

The catalysed reaction is 6-phospho-D-glucono-1,5-lactone + H2O = 6-phospho-D-gluconate + H(+). It functions in the pathway carbohydrate degradation; pentose phosphate pathway; D-ribulose 5-phosphate from D-glucose 6-phosphate (oxidative stage): step 2/3. Catalyzes the hydrolysis of 6-phosphogluconolactone to 6-phosphogluconate. In Yersinia enterocolitica serotype O:8 / biotype 1B (strain NCTC 13174 / 8081), this protein is 6-phosphogluconolactonase.